Consider the following 1806-residue polypeptide: Atrochrysone carboxylic acid synthase (1806 aa).

An N-terminal acylcarrier protein transacylase domain (SAT) region spans residues Asp30–His283. Residues Gln416–Glu850 form the Ketosynthase family 3 (KS3) domain. Catalysis depends on for beta-ketoacyl synthase activity residues Cys589, His725, and His768. The segment at Phe951–Val1270 is malonyl-CoA:ACP transacylase (MAT) domain. Positions Thr1340–Ala1659 are product template (PT) domain. An N-terminal hotdog fold region spans residues Gln1344–Leu1479. The PKS/mFAS DH domain maps to Gln1344 to Asn1654. His1376 (proton acceptor; for dehydratase activity) is an active-site residue. The interval Ile1506 to Asn1654 is C-terminal hotdog fold. Residue Asp1565 is the Proton donor; for dehydratase activity of the active site. The disordered stretch occupies residues His1668 to Ala1726. The span at Pro1685–Pro1708 shows a compositional bias: low complexity. The span at Ala1709–Ala1721 shows a compositional bias: pro residues. The Carrier domain occupies Gly1728–Tyr1805. Ser1765 is subject to O-(pantetheine 4'-phosphoryl)serine.

The enzyme catalyses holo-[ACP] + 8 malonyl-CoA + 8 H(+) = atrochrysone carboxyl-[ACP] + 8 CO2 + 8 CoA + 2 H2O. It participates in secondary metabolite biosynthesis. In terms of biological role, atrochrysone carboxylic acid synthase; part of the gene cluster that mediates the biosynthesis of monodictyphenone, a prenyl xanthone derivative. The pathway begins with the synthesis of atrochrysone thioester by the polyketide synthase (PKS) mdpG. The atrochrysone carboxyl ACP thioesterase mdpF then breaks the thioester bond and releases the atrochrysone carboxylic acid from mdpG. The atrochrysone carboxylic acid is then converted to atrochrysone which is further transformed into emodin anthrone. The next step is performed by the anthrone oxygenase mdpH that catalyzes the oxidation of emodinanthrone to emodin. Emodin is further modified to yield monodictyphenone via several steps involving mdpB, mdpC mdpJ, mdpK and mdpL. The short chain dehydrogenase mdpC converts the tautomers of emodin hydroquinone into the 3-hydroxy-3,4-dihydroan-thracen-1(2H)-one derivative. These enzymes with xptA, xptB and xptC are also proposed to be involved in the synthesis of shamixanthone from emodin. Especially, direct reduction of emodin by the short chain dehydrogenase mdpC followed by dehydration catalyzed by the scytalone dehydratase-like protein mdpB gives loss of oxygen and formation of chrysophanol intermediate in two simple steps. The protein is Atrochrysone carboxylic acid synthase of Emericella nidulans (strain FGSC A4 / ATCC 38163 / CBS 112.46 / NRRL 194 / M139) (Aspergillus nidulans).